The chain runs to 382 residues: 1-deoxy-D-xylulose 5-phosphate reductoisomerase (382 aa).

8 residues coordinate NADPH: Thr-10, Gly-11, Ser-12, Ile-13, Gly-36, Lys-37, Asn-38, and Asn-121. Lys-122 contacts 1-deoxy-D-xylulose 5-phosphate. Glu-123 is a binding site for NADPH. Asp-147 is a Mn(2+) binding site. 1-deoxy-D-xylulose 5-phosphate-binding residues include Ser-148, Glu-149, Ser-173, and His-196. Glu-149 is a Mn(2+) binding site. Residue Gly-202 participates in NADPH binding. 1-deoxy-D-xylulose 5-phosphate-binding residues include Ser-209, Asn-214, Lys-215, and Glu-218. Mn(2+) is bound at residue Glu-218.

This sequence belongs to the DXR family. The cofactor is Mg(2+). It depends on Mn(2+) as a cofactor.

The enzyme catalyses 2-C-methyl-D-erythritol 4-phosphate + NADP(+) = 1-deoxy-D-xylulose 5-phosphate + NADPH + H(+). Its pathway is isoprenoid biosynthesis; isopentenyl diphosphate biosynthesis via DXP pathway; isopentenyl diphosphate from 1-deoxy-D-xylulose 5-phosphate: step 1/6. Its function is as follows. Catalyzes the NADPH-dependent rearrangement and reduction of 1-deoxy-D-xylulose-5-phosphate (DXP) to 2-C-methyl-D-erythritol 4-phosphate (MEP). This chain is 1-deoxy-D-xylulose 5-phosphate reductoisomerase, found in Halalkalibacterium halodurans (strain ATCC BAA-125 / DSM 18197 / FERM 7344 / JCM 9153 / C-125) (Bacillus halodurans).